Consider the following 679-residue polypeptide: Transketolase 10 (679 aa).

Substrate is bound at residue histidine 40. Residues histidine 80 and 129–131 each bind thiamine diphosphate; that span reads GPL. Aspartate 170 is a binding site for Mg(2+). Residues glycine 171 and asparagine 200 each contribute to the thiamine diphosphate site. Mg(2+) contacts are provided by asparagine 200 and isoleucine 202. Residues histidine 277, arginine 371, and serine 398 each coordinate substrate. Thiamine diphosphate is bound at residue histidine 277. Positions 425 and 452 each coordinate thiamine diphosphate. Catalysis depends on glutamate 425, which acts as the Proton donor. 3 residues coordinate substrate: histidine 476, aspartate 484, and arginine 535.

It belongs to the transketolase family. Homodimer. Mg(2+) serves as cofactor. The cofactor is Ca(2+). Mn(2+) is required as a cofactor. It depends on Co(2+) as a cofactor. Requires thiamine diphosphate as cofactor. As to expression, leaves.

It carries out the reaction D-sedoheptulose 7-phosphate + D-glyceraldehyde 3-phosphate = aldehydo-D-ribose 5-phosphate + D-xylulose 5-phosphate. Functionally, could be involved in the conversion of sugars, which are a major phenomenon in the rehydration process. Catalyzes the transfer of a two-carbon ketol group from a ketose donor to an aldose acceptor, via a covalent intermediate with the cofactor thiamine pyrophosphate. In Craterostigma plantagineum (Blue gem), this protein is Transketolase 10 (TKT10).